A 226-amino-acid polypeptide reads, in one-letter code: Chalcone--flavanone isomerase 1 (226 aa).

Residues T52, N117, and T194 each contribute to the substrate site.

Belongs to the chalcone isomerase family.

It catalyses the reaction a chalcone = a flavanone.. It functions in the pathway secondary metabolite biosynthesis; flavonoid biosynthesis. Its function is as follows. Catalyzes the intramolecular cyclization of bicyclic chalcones into tricyclic (S)-flavanones. Responsible for the isomerization of 4,2',4',6'-tetrahydroxychalcone (also termed chalcone) into naringenin. This Lotus japonicus (Lotus corniculatus var. japonicus) protein is Chalcone--flavanone isomerase 1 (CHI1).